A 387-amino-acid chain; its full sequence is MGNCLDSSARVGNRESTFGGSSRISRKPNQSSRLSSLTIPSYSNNSFTTSSWSNLTPRSEGELLPSPTLKAFTFNELKTATRNFKPNSMIGEGGFGCVYKGWIGERSLSPSKPGSGMVVAVKKLKSEGFQGHKEWLTEVHYLGRLHHMNLVKLIGYCLEGEKRLLVYEYMPKGSLENHLFRRGAEPIPWKTRMKVAFSAARGLSFLHEAKVIYRDFKASNILLDVDFNAKLSDFGLAKAGPTGDRTHVTTQVIGTQGYAAPEYIATGRLTSKSDVYSFGVVLLELLSGRPTLDKSKVGVERNLVDWAIPYLVDRRKVFRIMDTKLGGQYPHKGACAAANIALRCLNTEPKLRPDMADVLSTLQQLETSSKKMGSTQNIVMSPSSHMS.

Residues 1–37 are disordered; it reads MGNCLDSSARVGNRESTFGGSSRISRKPNQSSRLSSL. Gly2 is lipidated: N-myristoyl glycine. Cys4 carries the S-palmitoyl cysteine lipid modification. Residues 14 to 37 are compositionally biased toward polar residues; it reads RESTFGGSSRISRKPNQSSRLSSL. Thr73 is modified (phosphothreonine). The region spanning 84–365 is the Protein kinase domain; it reads FKPNSMIGEG…ADVLSTLQQL (282 aa). Residues 90–98 and Lys122 contribute to the ATP site; that span reads IGEGGFGCV. Tyr167 carries the phosphotyrosine modification. The active-site Proton acceptor is Asp215. Ser219 carries the post-translational modification Phosphoserine. Thr250 and Thr255 each carry phosphothreonine. Tyr263 is subject to Phosphotyrosine. A disordered region spans residues 368 to 387; the sequence is SSKKMGSTQNIVMSPSSHMS.

Belongs to the protein kinase superfamily. Ser/Thr protein kinase family.

It is found in the cell membrane. It catalyses the reaction L-seryl-[protein] + ATP = O-phospho-L-seryl-[protein] + ADP + H(+). The enzyme catalyses L-threonyl-[protein] + ATP = O-phospho-L-threonyl-[protein] + ADP + H(+). In terms of biological role, may be involved in plant defense signaling. The chain is Probable serine/threonine-protein kinase PBL18 from Arabidopsis thaliana (Mouse-ear cress).